The chain runs to 370 residues: Cytoplasmic dynein intermediate light chain DYN3 (370 aa).

Belongs to the dynein light intermediate chain DYN3 family. The cytoplasmic dynein is composed of at least two heavy chains and a number of intermediate and light chains.

It is found in the cytoplasm. The protein resides in the cytoskeleton. Functionally, component of the cytoplasmic dynein which acts as a motor for the intracellular retrograde motility of vesicles and organelles along microtubules. May play an important role in the proper orientation of the mitotic spindle into the budding daughter cell yeast. Probably required for normal progression of the cell cycle. In Kluyveromyces lactis (strain ATCC 8585 / CBS 2359 / DSM 70799 / NBRC 1267 / NRRL Y-1140 / WM37) (Yeast), this protein is Cytoplasmic dynein intermediate light chain DYN3 (DYN3).